The following is a 309-amino-acid chain: Movement protein (309 aa).

Residues 245–273 form a disordered region; the sequence is HLSLNESKTLPSTSTTEAEGSERRIHIGA. Over residues 246–262 the composition is skewed to polar residues; that stretch reads LSLNESKTLPSTSTTEA.

The protein localises to the host cell junction. The protein resides in the host plasmodesma. Its function is as follows. Transports viral genome to neighboring plant cells directly through plasmosdesmata, without any budding. The movement protein allows efficient cell to cell propagation, by bypassing the host cell wall barrier. Acts by forming a tubular structure at the host plasmodesmata, enlarging it enough to allow free passage of virion capsids. This is Movement protein from Solanum lycopersicum (Tomato).